Here is a 458-residue protein sequence, read N- to C-terminus: Argininosuccinate lyase (458 aa).

This sequence belongs to the lyase 1 family. Argininosuccinate lyase subfamily.

The protein resides in the cytoplasm. The catalysed reaction is 2-(N(omega)-L-arginino)succinate = fumarate + L-arginine. The protein operates within amino-acid biosynthesis; L-arginine biosynthesis; L-arginine from L-ornithine and carbamoyl phosphate: step 3/3. The chain is Argininosuccinate lyase from Actinobacillus pleuropneumoniae serotype 5b (strain L20).